The sequence spans 104 residues: Small ribosomal subunit protein uS10 (104 aa).

This sequence belongs to the universal ribosomal protein uS10 family. As to quaternary structure, part of the 30S ribosomal subunit.

Its function is as follows. Involved in the binding of tRNA to the ribosomes. The chain is Small ribosomal subunit protein uS10 from Maricaulis maris (strain MCS10) (Caulobacter maris).